The primary structure comprises 217 residues: Large ribosomal subunit protein uL4 (217 aa).

The tract at residues 42 to 100 (RAAARQGTHSTKTRGDVSGGGRKPYRQKGTGRARQGSTRAPQFTGGGVVHGPKPRDYSQ) is disordered.

It belongs to the universal ribosomal protein uL4 family. In terms of assembly, part of the 50S ribosomal subunit.

Functionally, one of the primary rRNA binding proteins, this protein initially binds near the 5'-end of the 23S rRNA. It is important during the early stages of 50S assembly. It makes multiple contacts with different domains of the 23S rRNA in the assembled 50S subunit and ribosome. Forms part of the polypeptide exit tunnel. The chain is Large ribosomal subunit protein uL4 from Mycobacterium avium (strain 104).